The following is a 365-amino-acid chain: ADP-ribosylhydrolase ARH3 (365 aa).

Residues glutamate 42, threonine 77, aspartate 78, and aspartate 79 each coordinate Mg(2+). Aspartate 78 lines the substrate pocket. Substrate contacts are provided by residues 147-153, histidine 183, leucine 236, and isoleucine 272; that span reads KGSYGNG. Mg(2+) contacts are provided by aspartate 315, aspartate 317, and threonine 318.

This sequence belongs to the ADP-ribosylglycohydrolase family. As to quaternary structure, monomer. Mg(2+) is required as a cofactor.

Its subcellular location is the nucleus. The protein localises to the cytoplasm. It is found in the chromosome. The protein resides in the mitochondrion matrix. It catalyses the reaction [(1''-&gt;2')-ADP-alpha-D-ribose](n) + H2O = [(1''-&gt;2')-ADP-alpha-D-ribose](n-1) + ADP-D-ribose. The enzyme catalyses 1''-O-acetyl-ADP-alpha-D-ribose + H2O = ADP-D-ribose + acetate + H(+). The catalysed reaction is O-(ADP-D-ribosyl)-L-seryl-[protein] + H2O = ADP-D-ribose + L-seryl-[protein]. It carries out the reaction alpha-NAD(+) + H2O = ADP-D-ribose + nicotinamide + H(+). With respect to regulation, the protein undergoes a dramatic conformational switch from closed to open states upon substrate-binding, which enables specific substrate recognition for the 1''-O-linkage. The glutamate flap (Glu-42) blocks substrate entrance to Mg(2+) in the unliganded closed state. In presence of substrate, Glu-42 is ejected from the active site: this closed-to-open transition significantly widens the substrate-binding channel and precisely positions the scissile 1''-O-linkage for cleavage while securing tightly 2'- and 3'-hydroxyls of ADP-ribose. In terms of biological role, ADP-ribosylhydrolase that preferentially hydrolyzes the scissile alpha-O-linkage attached to the anomeric C1'' position of ADP-ribose and acts on different substrates, such as proteins ADP-ribosylated on serine and threonine, free poly(ADP-ribose) and O-acetyl-ADP-D-ribose. Specifically acts as a serine mono-ADP-ribosylhydrolase by mediating the removal of mono-ADP-ribose attached to serine residues on proteins, thereby playing a key role in DNA damage response. Serine ADP-ribosylation of proteins constitutes the primary form of ADP-ribosylation of proteins in response to DNA damage. Does not hydrolyze ADP-ribosyl-arginine, -cysteine, -diphthamide, or -asparagine bonds. Also able to degrade protein free poly(ADP-ribose), which is synthesized in response to DNA damage: free poly(ADP-ribose) acts as a potent cell death signal and its degradation by ADPRHL2 protects cells from poly(ADP-ribose)-dependent cell death, a process named parthanatos. Also hydrolyzes free poly(ADP-ribose) in mitochondria. Specifically digests O-acetyl-ADP-D-ribose, a product of deacetylation reactions catalyzed by sirtuins. Specifically degrades 1''-O-acetyl-ADP-D-ribose isomer, rather than 2''-O-acetyl-ADP-D-ribose or 3''-O-acetyl-ADP-D-ribose isomers. This Bos taurus (Bovine) protein is ADP-ribosylhydrolase ARH3 (ADPRS).